We begin with the raw amino-acid sequence, 244 residues long: Probable transcriptional regulatory protein BT0025 (244 aa).

Belongs to the TACO1 family.

The protein localises to the cytoplasm. This chain is Probable transcriptional regulatory protein BT0025, found in Borrelia turicatae (strain 91E135).